Here is a 424-residue protein sequence, read N- to C-terminus: ATP-dependent RNA helicase WM6 (424 aa).

The span at 1–16 (MADNDDLLDYEDEEQT) shows a compositional bias: acidic residues. Residues 1-27 (MADNDDLLDYEDEEQTETTAVENQEAP) are disordered. Residues 41–69 (SGFRDFLLKPEILRAIVDCGFEHPSEVQH) carry the Q motif motif. One can recognise a Helicase ATP-binding domain in the interval 72–246 (IPQAVLGMDI…KKFMQDPMEV (175 aa)). 85 to 92 (AKSGMGKT) serves as a coordination point for ATP. The short motif at 193–196 (DECD) is the DECD box element. Residues 258 to 419 (GLQQHYVNLK…ELPEEIDLST (162 aa)) form the Helicase C-terminal domain.

This sequence belongs to the DEAD box helicase family. DECD subfamily. Component of the spliceosome. Interacts with the exon junction complex.

It is found in the nucleus speckle. It catalyses the reaction ATP + H2O = ADP + phosphate + H(+). Its function is as follows. Required for mRNA export out of the nucleus. Probable RNA helicase that may regulate entry into mitosis by down-regulating the expression of other genes whose activity may be rate-limiting for entry into mitosis during embryogenesis. Binds to salivary gland chromosomes and modifies position effect variegation. Promotes an open chromatin structure that favors transcription during development by regulating the spread of heterochromatin. The sequence is that of ATP-dependent RNA helicase WM6 (Hel25E) from Drosophila melanogaster (Fruit fly).